The chain runs to 525 residues: Cytochrome P450 4V2 (525 aa).

Residues 13–33 (LLLWGAASAVSLAGASLVLSL) form a helical membrane-spanning segment. Heme-binding residues include E329 and C467.

Belongs to the cytochrome P450 family. It depends on heme as a cofactor.

The protein resides in the endoplasmic reticulum membrane. It catalyses the reaction dodecanoate + reduced [NADPH--hemoprotein reductase] + O2 = 12-hydroxydodecanoate + oxidized [NADPH--hemoprotein reductase] + H2O + H(+). The catalysed reaction is tetradecanoate + reduced [NADPH--hemoprotein reductase] + O2 = 14-hydroxytetradecanoate + oxidized [NADPH--hemoprotein reductase] + H2O + H(+). It carries out the reaction hexadecanoate + reduced [NADPH--hemoprotein reductase] + O2 = 16-hydroxyhexadecanoate + oxidized [NADPH--hemoprotein reductase] + H2O + H(+). The enzyme catalyses (5Z,8Z,11Z,14Z,17Z)-eicosapentaenoate + reduced [NADPH--hemoprotein reductase] + O2 = 20-hydroxy-(5Z,8Z,11Z,14Z,17Z)-eicosapentaenoate + oxidized [NADPH--hemoprotein reductase] + H2O + H(+). It catalyses the reaction (4Z,7Z,10Z,13Z,16Z,19Z)-docosahexaenoate + reduced [NADPH--hemoprotein reductase] + O2 = 22-hydroxy-(4Z,7Z,10Z,13Z,16Z,19Z)-docosahexaenoate + oxidized [NADPH--hemoprotein reductase] + H2O + H(+). Its pathway is lipid metabolism; fatty acid metabolism. Inhibited by N-hydroxy-N'-(4-n-butyl-2-methylphenyl formamidine)(HET0016) with an IC(50) of 38 nM. Its function is as follows. A cytochrome P450 monooxygenase involved in fatty acid metabolism in the eye. Catalyzes the omega-hydroxylation of polyunsaturated fatty acids (PUFAs) docosahexaenoate (DHA) and its precursor eicosapentaenoate (EPA), and may contribute to the homeostasis of these retinal PUFAs. Omega hydroxylates saturated fatty acids such as laurate, myristate and palmitate, the catalytic efficiency decreasing in the following order: myristate &gt; laurate &gt; palmitate (C14&gt;C12&gt;C16). Mechanistically, uses molecular oxygen inserting one oxygen atom into a substrate, and reducing the second into a water molecule, with two electrons provided by NADPH via cytochrome P450 reductase (CPR; NADPH-ferrihemoprotein reductase). The polypeptide is Cytochrome P450 4V2 (CYP4V2) (Pongo abelii (Sumatran orangutan)).